A 447-amino-acid polypeptide reads, in one-letter code: Exodeoxyribonuclease 7 large subunit (447 aa).

Belongs to the XseA family. Heterooligomer composed of large and small subunits.

It is found in the cytoplasm. The catalysed reaction is Exonucleolytic cleavage in either 5'- to 3'- or 3'- to 5'-direction to yield nucleoside 5'-phosphates.. Bidirectionally degrades single-stranded DNA into large acid-insoluble oligonucleotides, which are then degraded further into small acid-soluble oligonucleotides. The protein is Exodeoxyribonuclease 7 large subunit of Streptococcus mutans serotype c (strain ATCC 700610 / UA159).